The chain runs to 205 residues: Small ribosomal subunit protein uS4 (205 aa).

Over residues methionine 1 to glycine 16 the composition is skewed to basic and acidic residues. A disordered region spans residues methionine 1–serine 46. The S4 RNA-binding domain maps to serine 94 to valine 157.

The protein belongs to the universal ribosomal protein uS4 family. Part of the 30S ribosomal subunit. Contacts protein S5. The interaction surface between S4 and S5 is involved in control of translational fidelity.

Its function is as follows. One of the primary rRNA binding proteins, it binds directly to 16S rRNA where it nucleates assembly of the body of the 30S subunit. With S5 and S12 plays an important role in translational accuracy. The sequence is that of Small ribosomal subunit protein uS4 from Rhizobium johnstonii (strain DSM 114642 / LMG 32736 / 3841) (Rhizobium leguminosarum bv. viciae).